The primary structure comprises 185 residues: Ribosome-recycling factor (185 aa).

The protein belongs to the RRF family.

It localises to the cytoplasm. Its function is as follows. Responsible for the release of ribosomes from messenger RNA at the termination of protein biosynthesis. May increase the efficiency of translation by recycling ribosomes from one round of translation to another. This is Ribosome-recycling factor from Shewanella sp. (strain W3-18-1).